The following is a 384-amino-acid chain: MSSYLFTSESVSEGHPDKIADQISDAVLDEILKQDPKARVACETYVKTGMALVGGEITTSAWVDIENLTRKVICDIGYEHSEMGFDGHSCAVLNAIGKQSADINQGVDRENPLDQGAGDQGIMFGYATNETDVLMPAAITYAHRLMEKQAEVRKSGKLAWLRPDAKSQVTLKYEDNKIVGVDAVVLSTQHSEEVSQKDLHEGVMEEIIKPVLPSEWLSKETKFFINPTGRFVIGGPMGDCGLTGRKIIVDTYGGAARHGGGAFSGKDPSKVDRSAAYAARYVAKNIVAAGLADRCEIQLSYAIGVADPTSIMVETFGTGKVANELLVSLVREFFDLRPYGLIKMLDLIQPIYRETAAYGHFGREQFPWEKVDRAEDLRVAAGLK.

His15 contacts ATP. Position 17 (Asp17) interacts with Mg(2+). Glu43 is a K(+) binding site. Residues Glu56 and Gln99 each coordinate L-methionine. The interval Gln99–Arg109 is flexible loop. Residues Asp164 to Lys166, Arg230 to Phe231, Asp239, Arg245 to Lys246, Ala262, and Lys266 each bind ATP. Asp239 serves as a coordination point for L-methionine. L-methionine is bound at residue Lys270.

Belongs to the AdoMet synthase family. As to quaternary structure, homotetramer; dimer of dimers. Requires Mg(2+) as cofactor. The cofactor is K(+).

Its subcellular location is the cytoplasm. The enzyme catalyses L-methionine + ATP + H2O = S-adenosyl-L-methionine + phosphate + diphosphate. It functions in the pathway amino-acid biosynthesis; S-adenosyl-L-methionine biosynthesis; S-adenosyl-L-methionine from L-methionine: step 1/1. Catalyzes the formation of S-adenosylmethionine (AdoMet) from methionine and ATP. The overall synthetic reaction is composed of two sequential steps, AdoMet formation and the subsequent tripolyphosphate hydrolysis which occurs prior to release of AdoMet from the enzyme. This is S-adenosylmethionine synthase from Haemophilus influenzae (strain PittGG).